We begin with the raw amino-acid sequence, 177 residues long: Probable inosine/xanthosine triphosphatase (177 aa).

Belongs to the YjjX NTPase family. Homodimer. It depends on Mg(2+) as a cofactor. Mn(2+) serves as cofactor.

It catalyses the reaction XTP + H2O = XDP + phosphate + H(+). The catalysed reaction is ITP + H2O = IDP + phosphate + H(+). In terms of biological role, phosphatase that hydrolyzes non-canonical purine nucleotides such as XTP and ITP to their respective diphosphate derivatives. Probably excludes non-canonical purines from DNA/RNA precursor pool, thus preventing their incorporation into DNA/RNA and avoiding chromosomal lesions. This is Probable inosine/xanthosine triphosphatase from Halalkalibacterium halodurans (strain ATCC BAA-125 / DSM 18197 / FERM 7344 / JCM 9153 / C-125) (Bacillus halodurans).